The sequence spans 628 residues: DNA ligase (628 aa).

Residues 36-40 (DVEYD), 85-86 (SL), and glutamate 117 each bind NAD(+). The N6-AMP-lysine intermediate role is filled by lysine 119. NAD(+) contacts are provided by arginine 140, glutamate 174, lysine 309, and lysine 333. Zn(2+) contacts are provided by cysteine 427, cysteine 430, cysteine 446, and cysteine 452.

It belongs to the NAD-dependent DNA ligase family. LigA subfamily. Mg(2+) serves as cofactor. Requires Mn(2+) as cofactor.

The enzyme catalyses NAD(+) + (deoxyribonucleotide)n-3'-hydroxyl + 5'-phospho-(deoxyribonucleotide)m = (deoxyribonucleotide)n+m + AMP + beta-nicotinamide D-nucleotide.. In terms of biological role, DNA ligase that catalyzes the formation of phosphodiester linkages between 5'-phosphoryl and 3'-hydroxyl groups in double-stranded DNA using NAD as a coenzyme and as the energy source for the reaction. It is essential for DNA replication and repair of damaged DNA. This is DNA ligase from Tropheryma whipplei (strain TW08/27) (Whipple's bacillus).